Consider the following 444-residue polypeptide: Glutamyl-tRNA reductase (444 aa).

Substrate is bound by residues 49 to 52, Ser-109, 114 to 116, and Gln-120; these read TCNR and ETQ. Cys-50 (nucleophile) is an active-site residue. 189–194 lines the NADP(+) pocket; that stretch reads GAGKMG.

This sequence belongs to the glutamyl-tRNA reductase family. Homodimer.

The enzyme catalyses (S)-4-amino-5-oxopentanoate + tRNA(Glu) + NADP(+) = L-glutamyl-tRNA(Glu) + NADPH + H(+). It participates in porphyrin-containing compound metabolism; protoporphyrin-IX biosynthesis; 5-aminolevulinate from L-glutamyl-tRNA(Glu): step 1/2. Functionally, catalyzes the NADPH-dependent reduction of glutamyl-tRNA(Glu) to glutamate 1-semialdehyde (GSA). The polypeptide is Glutamyl-tRNA reductase (Bacillus cereus (strain AH187)).